A 369-amino-acid polypeptide reads, in one-letter code: Methionine import ATP-binding protein MetN 2 (369 aa).

The 238-residue stretch at Val33–Leu270 folds into the ABC transporter domain. Position 67-74 (Gly67–Ser74) interacts with ATP.

Belongs to the ABC transporter superfamily. Methionine importer (TC 3.A.1.24) family. In terms of assembly, the complex is composed of two ATP-binding proteins (MetN), two transmembrane proteins (MetI) and a solute-binding protein (MetQ).

The protein localises to the cell inner membrane. The enzyme catalyses L-methionine(out) + ATP + H2O = L-methionine(in) + ADP + phosphate + H(+). It catalyses the reaction D-methionine(out) + ATP + H2O = D-methionine(in) + ADP + phosphate + H(+). In terms of biological role, part of the ABC transporter complex MetNIQ involved in methionine import. Responsible for energy coupling to the transport system. In Pseudomonas putida (strain ATCC 47054 / DSM 6125 / CFBP 8728 / NCIMB 11950 / KT2440), this protein is Methionine import ATP-binding protein MetN 2.